We begin with the raw amino-acid sequence, 95 residues long: Small ribosomal subunit protein bS16 (95 aa).

This sequence belongs to the bacterial ribosomal protein bS16 family.

In Thermosipho melanesiensis (strain DSM 12029 / CIP 104789 / BI429), this protein is Small ribosomal subunit protein bS16.